Here is a 455-residue protein sequence, read N- to C-terminus: Retinoic acid receptor beta (455 aa).

The tract at residues 1–87 (MTTSGHACPV…PLPPPRVYKP (87 aa)) is modulating. Residues 47 to 78 (HPPPSGCSTPSPATIETQSTSSEELVPSPPSP) form a disordered region. The span at 53–66 (CSTPSPATIETQST) shows a compositional bias: polar residues. Serine 77 is subject to Phosphoserine. 2 NR C4-type zinc fingers span residues 88 to 108 (CFVC…CEGC) and 124 to 148 (CHRD…LQKC). The segment at residues 88 to 153 (CFVCQDKSSG…RLQKCFEVGM (66 aa)) is a DNA-binding region (nuclear receptor). The tract at residues 154–182 (SKESVRNDRNKKKKETSKQECTESYEMTA) is hinge. An NR LBD domain is found at 183-417 (ELDDLTEKIR…PLIQEMLENS (235 aa)). The interval 415–455 (ENSEGHEPLTPSSSGNTAEHSPSISPSSVENSGVSQSPLVQ) is disordered. Polar residues predominate over residues 424 to 434 (TPSSSGNTAEH). Positions 435 to 455 (SPSISPSSVENSGVSQSPLVQ) are enriched in low complexity.

The protein belongs to the nuclear hormone receptor family. NR1 subfamily. As to quaternary structure, homodimer. Heterodimer; with a RXR molecule. Binds DNA preferentially as a RAR/RXR heterodimer. Heterodimerizes (via NR LBD) with RXRA. Interacts weakly with NCOR2. Expressed in aortic endothelial cells (at protein level).

It localises to the nucleus. It is found in the cytoplasm. Functionally, receptor for retinoic acid. Retinoic acid receptors bind as heterodimers to their target response elements in response to their ligands, all-trans or 9-cis retinoic acid, and regulate gene expression in various biological processes. The RXR/RAR heterodimers bind to the retinoic acid response elements (RARE) composed of tandem 5'-AGGTCA-3' sites known as DR1-DR5. In the absence or presence of hormone ligand, acts mainly as an activator of gene expression due to weak binding to corepressors. The RXRA/RARB heterodimer can act as a repressor on the DR1 element and as an activator on the DR5 element. In concert with RARG, required for skeletal growth, matrix homeostasis and growth plate function. The sequence is that of Retinoic acid receptor beta (RARB) from Homo sapiens (Human).